A 452-amino-acid polypeptide reads, in one-letter code: Maltoporin (452 aa).

The first 25 residues, 1-25 (MMITLRKLPLAVAVAAGVMSAQAMA), serve as a signal peptide directing secretion.

The protein belongs to the porin LamB (TC 1.B.3) family. Homotrimer formed of three 18-stranded antiparallel beta-barrels, containing three independent channels.

It localises to the cell outer membrane. It catalyses the reaction beta-maltose(in) = beta-maltose(out). Functionally, involved in the transport of maltose and maltodextrins. This is Maltoporin from Salmonella paratyphi A (strain ATCC 9150 / SARB42).